The following is a 444-amino-acid chain: Tol-Pal system protein TolB (444 aa).

Residues 1-19 (MRNIIYFILSLLFSVTSYA) form the signal peptide.

This sequence belongs to the TolB family. As to quaternary structure, the Tol-Pal system is composed of five core proteins: the inner membrane proteins TolA, TolQ and TolR, the periplasmic protein TolB and the outer membrane protein Pal. They form a network linking the inner and outer membranes and the peptidoglycan layer.

It is found in the periplasm. In terms of biological role, part of the Tol-Pal system, which plays a role in outer membrane invagination during cell division and is important for maintaining outer membrane integrity. In Rickettsia conorii (strain ATCC VR-613 / Malish 7), this protein is Tol-Pal system protein TolB.